A 692-amino-acid chain; its full sequence is Elongation factor G 1 (692 aa).

One can recognise a tr-type G domain in the interval 8-283 (EKTRNIGIMA…SVVEYLPSPV (276 aa)). Residues 17 to 24 (AHIDAGKT), 81 to 85 (DTPGH), and 135 to 138 (NKMD) contribute to the GTP site.

This sequence belongs to the TRAFAC class translation factor GTPase superfamily. Classic translation factor GTPase family. EF-G/EF-2 subfamily.

It is found in the cytoplasm. Functionally, catalyzes the GTP-dependent ribosomal translocation step during translation elongation. During this step, the ribosome changes from the pre-translocational (PRE) to the post-translocational (POST) state as the newly formed A-site-bound peptidyl-tRNA and P-site-bound deacylated tRNA move to the P and E sites, respectively. Catalyzes the coordinated movement of the two tRNA molecules, the mRNA and conformational changes in the ribosome. The protein is Elongation factor G 1 of Geobacter metallireducens (strain ATCC 53774 / DSM 7210 / GS-15).